We begin with the raw amino-acid sequence, 326 residues long: ELMO domain-containing protein 1 (326 aa).

The ELMO domain occupies 133–306 (QHEEMLLKLW…KFRKRIIKQL (174 aa)).

In terms of biological role, acts as a GTPase-activating protein (GAP) toward guanine nucleotide exchange factors like ARL2, ARL3, ARF1 and ARF6, but not for GTPases outside the Arf family. In Pongo abelii (Sumatran orangutan), this protein is ELMO domain-containing protein 1 (ELMOD1).